The chain runs to 66 residues: Omega conotoxin-CVIE (66 aa).

An N-terminal signal peptide occupies residues 1-17; that stretch reads VVIVAVLLLTACQLITA. Positions 18–40 are excised as a propeptide; sequence NDSRGTQKHRALRSDTKLSMSTR. Disulfide bonds link C41-C56, C48-C60, and C55-C65. A Cysteine amide modification is found at C65.

It belongs to the conotoxin O1 superfamily. As to expression, expressed by the venom duct.

The protein localises to the secreted. Its function is as follows. Omega-conotoxins act at presynaptic membranes, they bind and block voltage-gated calcium channels. This toxin blocks N-type calcium channels (Cav2.2/CACNA1B). It shows a higher potency when Cav2.2/CACNA1B is only expressed with the ancillary subunit CACNB3 (IC(50)=0.12 nM) than on Cav2.2/CACNA1B expressed with the ancillary subunits CACNA2D1 and CACNB3 (IC(50)=2.6 nM). The Cav2.2/CACNA1B block by this toxin is voltage-independent, whereas the recovery from toxin block is voltage-dependent. There is a low recovery at physiological membrane potential and a high recovery with hyperpolarized potential. This indicates that the toxin has a higher affinity for Cav2.2/CACNA1B in the inactivated state. It is noteworthy that ancillary subunits beta modulate recovery from this toxin block. Cav2.2/CACNA1B expressed with the ancillary subunit CACNB2a (isoform 2a) almost recover completely from this toxin block, whereas Cav2.2/CACNA1B expressed with CACNB3 exhibits relatively weak recovery. Inhibition by this toxin of excitatory synaptic transmission is reversible. In vivo, when tested on rat model of persistent pain, this toxin blocks chronic pain behavior. The sequence is that of Omega conotoxin-CVIE from Conus catus (Cat cone).